Here is a 400-residue protein sequence, read N- to C-terminus: Putative cytochrome P450 141 (400 aa).

A run of 2 helical transmembrane segments spans residues 225 to 245 (VVGM…AVIT) and 294 to 314 (VVIA…ITSA). Residue Cys-346 participates in heme binding.

It belongs to the cytochrome P450 family. Requires heme as cofactor.

The protein resides in the cell membrane. This is Putative cytochrome P450 141 (cyp141) from Mycobacterium tuberculosis (strain CDC 1551 / Oshkosh).